Here is a 389-residue protein sequence, read N- to C-terminus: GTPase Obg (389 aa).

In terms of domain architecture, Obg spans 1–159; sequence MKFVDEAVIK…RELRLELLLL (159 aa). An OBG-type G domain is found at 160 to 333; sequence ADVGLLGMPN…LAEKLFDFIK (174 aa). Residues 166-173, 191-195, 213-216, 283-286, and 314-316 each bind GTP; these read GMPNAGKS, FTTLV, DIPG, NKTD, and SAA. Residues S173 and T193 each coordinate Mg(2+).

This sequence belongs to the TRAFAC class OBG-HflX-like GTPase superfamily. OBG GTPase family. As to quaternary structure, monomer. Mg(2+) is required as a cofactor.

The protein localises to the cytoplasm. An essential GTPase which binds GTP, GDP and possibly (p)ppGpp with moderate affinity, with high nucleotide exchange rates and a fairly low GTP hydrolysis rate. Plays a role in control of the cell cycle, stress response, ribosome biogenesis and in those bacteria that undergo differentiation, in morphogenesis control. The protein is GTPase Obg of Shewanella amazonensis (strain ATCC BAA-1098 / SB2B).